We begin with the raw amino-acid sequence, 553 residues long: Putative transport protein YidE (553 aa).

The next 5 helical transmembrane spans lie at 4-24 (IALT…IGNV), 28-48 (GIGL…HFVS), 65-85 (FGLI…FFAS), 95-115 (LFAV…HKLF), and 158-178 (MSYA…MWML). 2 consecutive RCK C-terminal domains span residues 191–276 (QQHE…VIGQ) and 279–361 (DTSL…VLGN). 6 consecutive transmembrane segments (helical) span residues 371 to 391 (MLPV…PVFV), 393 to 413 (GFPA…ALIL), 439 to 459 (IVLF…NTLV), 464 to 484 (LSWI…VGIL), 493 to 513 (YLTM…LAFA), and 533 to 553 (LVMF…WSIG).

Belongs to the AAE transporter (TC 2.A.81) family. YidE subfamily.

The protein resides in the cell membrane. This is Putative transport protein YidE from Escherichia coli O7:K1 (strain IAI39 / ExPEC).